A 350-amino-acid polypeptide reads, in one-letter code: 8-amino-7-oxononanoate synthase (350 aa).

77 to 78 contributes to the pyridoxal 5'-phosphate binding site; the sequence is GY. Residue His-102 participates in substrate binding. Residues Ser-150, 175–178, and 204–207 contribute to the pyridoxal 5'-phosphate site; these read DDAH and TLSK. Residue Lys-207 is modified to N6-(pyridoxal phosphate)lysine. Thr-316 is a binding site for substrate.

The protein belongs to the class-II pyridoxal-phosphate-dependent aminotransferase family. BioF subfamily. Homodimer. The cofactor is pyridoxal 5'-phosphate.

It catalyses the reaction 6-carboxyhexanoyl-[ACP] + L-alanine + H(+) = (8S)-8-amino-7-oxononanoate + holo-[ACP] + CO2. Its pathway is cofactor biosynthesis; biotin biosynthesis. Its function is as follows. Catalyzes the decarboxylative condensation of pimeloyl-[acyl-carrier protein] and L-alanine to produce 8-amino-7-oxononanoate (AON), [acyl-carrier protein], and carbon dioxide. In Methylocella silvestris (strain DSM 15510 / CIP 108128 / LMG 27833 / NCIMB 13906 / BL2), this protein is 8-amino-7-oxononanoate synthase.